Reading from the N-terminus, the 262-residue chain is Encapsulin nanocompartment protein Rv1762c (262 aa).

The protein belongs to the UPF0145 family.

It localises to the encapsulin nanocompartment. Cargo protein of a type 1 encapsulin nanocompartment possibly involved in protection against oxidative stress. In Mycobacterium tuberculosis (strain ATCC 25618 / H37Rv), this protein is Encapsulin nanocompartment protein Rv1762c.